Here is a 320-residue protein sequence, read N- to C-terminus: Na(+)-translocating NADH-quinone reductase subunit C (320 aa).

Residues 16-36 form a helical membrane-spanning segment; the sequence is WYIVSFILGLSLFAGVLLSTI. Thr285 carries the FMN phosphoryl threonine modification.

It belongs to the NqrC family. Composed of six subunits; NqrA, NqrB, NqrC, NqrD, NqrE and NqrF. Requires FMN as cofactor.

The protein resides in the cell inner membrane. It carries out the reaction a ubiquinone + n Na(+)(in) + NADH + H(+) = a ubiquinol + n Na(+)(out) + NAD(+). Its function is as follows. NQR complex catalyzes the reduction of ubiquinone-1 to ubiquinol by two successive reactions, coupled with the transport of Na(+) ions from the cytoplasm to the periplasm. NqrA to NqrE are probably involved in the second step, the conversion of ubisemiquinone to ubiquinol. The protein is Na(+)-translocating NADH-quinone reductase subunit C of Chlamydia pneumoniae (Chlamydophila pneumoniae).